Reading from the N-terminus, the 687-residue chain is Glycine--tRNA ligase beta subunit (687 aa).

This sequence belongs to the class-II aminoacyl-tRNA synthetase family. In terms of assembly, tetramer of two alpha and two beta subunits.

Its subcellular location is the cytoplasm. The enzyme catalyses tRNA(Gly) + glycine + ATP = glycyl-tRNA(Gly) + AMP + diphosphate. The sequence is that of Glycine--tRNA ligase beta subunit from Citrifermentans bemidjiense (strain ATCC BAA-1014 / DSM 16622 / JCM 12645 / Bem) (Geobacter bemidjiensis).